A 179-amino-acid chain; its full sequence is Enhancer of split m8 protein (179 aa).

The 56-residue stretch at 10 to 65 (YQKVKKPMLERQRRARMNKCLDNLKTLVAELRGDDGILRMDKAEMLESAVIFMRQQ) folds into the bHLH domain. The region spanning 83-116 (FKNGYMNAVNEVSRVMASTPGMSVDLGKSVMTHL) is the Orange domain. The disordered stretch occupies residues 146-179 (DKAPLSPASSGYHSDCDSPAPSPQPMQQPLWRPW). Positions 176–179 (WRPW) match the WRPW motif motif.

Homodimer. Heterodimers with dpn. Transcription repression requires formation of a complex with a corepressor protein (Groucho).

It localises to the nucleus. In terms of biological role, participates in the control of cell fate choice by uncommitted neuroectodermal cells in the embryo. Transcriptional repressor. Binds DNA on N-box motifs: 5'-CACNAG-3'. Part of the Notch signaling pathway. This chain is Enhancer of split m8 protein, found in Drosophila melanogaster (Fruit fly).